A 312-amino-acid polypeptide reads, in one-letter code: MNWTELSIVVNHEVEPLVTDILENYGSNGVVIEDSNDLINQPADKFGEIYELKQEDYPEKGVRLKAYFNELKFDDSLRNKIKTAVTNLENIDSTVLNFSEQTIAEVDWENEWKNYFHPFRASEKFTIVPSWEQYTKEDDSEMCIELDPGMAFGTGDHPTTSMCLKAIETYVDSDNSVIDVGTGSGILSIASHLLGVKRIKALDIDELAVNVAKENFAKNHCEDAIEAVPGNLLKNETEKFDIVIANILAHIIEDMIEDAYNTLNKDGYFITSGIIEEKHKQILNKMQNVGFDIKSVNHDNGWVCIVGQKVSE.

Residues Thr-160, Gly-181, Asp-203, and Asn-246 each coordinate S-adenosyl-L-methionine.

Belongs to the methyltransferase superfamily. PrmA family.

It is found in the cytoplasm. It catalyses the reaction L-lysyl-[protein] + 3 S-adenosyl-L-methionine = N(6),N(6),N(6)-trimethyl-L-lysyl-[protein] + 3 S-adenosyl-L-homocysteine + 3 H(+). Its function is as follows. Methylates ribosomal protein L11. The polypeptide is Ribosomal protein L11 methyltransferase (Staphylococcus haemolyticus (strain JCSC1435)).